The primary structure comprises 1357 residues: DNA-directed RNA polymerase subunit beta (1357 aa).

Belongs to the RNA polymerase beta chain family. The RNAP catalytic core consists of 2 alpha, 1 beta, 1 beta' and 1 omega subunit. When a sigma factor is associated with the core the holoenzyme is formed, which can initiate transcription.

The enzyme catalyses RNA(n) + a ribonucleoside 5'-triphosphate = RNA(n+1) + diphosphate. In terms of biological role, DNA-dependent RNA polymerase catalyzes the transcription of DNA into RNA using the four ribonucleoside triphosphates as substrates. This chain is DNA-directed RNA polymerase subunit beta, found in Pseudomonas putida (Arthrobacter siderocapsulatus).